The sequence spans 416 residues: Gamma-glutamyl phosphate reductase (416 aa).

Belongs to the gamma-glutamyl phosphate reductase family.

It is found in the cytoplasm. It catalyses the reaction L-glutamate 5-semialdehyde + phosphate + NADP(+) = L-glutamyl 5-phosphate + NADPH + H(+). It participates in amino-acid biosynthesis; L-proline biosynthesis; L-glutamate 5-semialdehyde from L-glutamate: step 2/2. Functionally, catalyzes the NADPH-dependent reduction of L-glutamate 5-phosphate into L-glutamate 5-semialdehyde and phosphate. The product spontaneously undergoes cyclization to form 1-pyrroline-5-carboxylate. This Streptococcus thermophilus protein is Gamma-glutamyl phosphate reductase.